The primary structure comprises 261 residues: Indole-3-glycerol phosphate synthase (261 aa).

It belongs to the TrpC family.

The catalysed reaction is 1-(2-carboxyphenylamino)-1-deoxy-D-ribulose 5-phosphate + H(+) = (1S,2R)-1-C-(indol-3-yl)glycerol 3-phosphate + CO2 + H2O. It participates in amino-acid biosynthesis; L-tryptophan biosynthesis; L-tryptophan from chorismate: step 4/5. In Campylobacter hominis (strain ATCC BAA-381 / DSM 21671 / CCUG 45161 / LMG 19568 / NCTC 13146 / CH001A), this protein is Indole-3-glycerol phosphate synthase.